Reading from the N-terminus, the 132-residue chain is uncharacterized protein (132 aa).

Positions 107 to 132 (LNTFSGSGQKHSQPGSGQHPFSFRKD) are disordered. Positions 108 to 122 (NTFSGSGQKHSQPGS) are enriched in polar residues.

This is an uncharacterized protein from Bacillus subtilis (strain 168).